Reading from the N-terminus, the 215-residue chain is Cytochrome b6 (215 aa).

Residues 32–52 (IFYCLGGITLTCFLVQVATGF) form a helical membrane-spanning segment. A heme c-binding site is contributed by Cys-35. His-86 and His-100 together coordinate heme b. The next 3 membrane-spanning stretches (helical) occupy residues 90–110 (ASMM…TGGF), 116–136 (LTWV…VTGY), and 186–206 (LHTF…FLMI). Heme b-binding residues include His-187 and His-202.

The protein belongs to the cytochrome b family. PetB subfamily. The 4 large subunits of the cytochrome b6-f complex are cytochrome b6, subunit IV (17 kDa polypeptide, PetD), cytochrome f and the Rieske protein, while the 4 small subunits are PetG, PetL, PetM and PetN. The complex functions as a dimer. Heme b is required as a cofactor. It depends on heme c as a cofactor.

It is found in the plastid. Its subcellular location is the chloroplast thylakoid membrane. In terms of biological role, component of the cytochrome b6-f complex, which mediates electron transfer between photosystem II (PSII) and photosystem I (PSI), cyclic electron flow around PSI, and state transitions. In Pelargonium hortorum (Common geranium), this protein is Cytochrome b6.